We begin with the raw amino-acid sequence, 447 residues long: MSRKLFGTDGVRGRANTHPMTAEMALRLGAAAGRYFRRSGEDHHRVVIGKDTRLSGYMLENALTAGLTSTGMNVLLLGPVPTPAVGYLTRSMRADVGIMISASHNPAHDNGIKFFGPDGFKLSDEAEARIEAIVAGEIIPAQPQNIGRAKRIDDGRGRYVEYAKTTFPSGQRLEGLKVVVDCANGAAYRAAPDVLWELGAEVIPLGVSPNGHNINDGLGSTHPEACARAVLEHGADMGISLDGDADRVMIVDEKGQVADGDQIMALLAARWAAQGRLRGGALVATVMSNLGLERFLQGRGLRLERTAVGDRYVVERMRGAGFNLGGEQSGHIVMTDYATTGDGLIASLQFLAALSDSGQRASELVAQFEPVPQLLKNVRYAVGADPLSKDSVQAEIARAEARLNGSGRVLIRKSGTEPLIRVMAEAEDETVLREVVEDIVAAVEKAA.

Ser-103 functions as the Phosphoserine intermediate in the catalytic mechanism. Residues Ser-103, Asp-242, Asp-244, and Asp-246 each contribute to the Mg(2+) site. Position 103 is a phosphoserine (Ser-103).

This sequence belongs to the phosphohexose mutase family. Mg(2+) serves as cofactor. Activated by phosphorylation.

The catalysed reaction is alpha-D-glucosamine 1-phosphate = D-glucosamine 6-phosphate. Catalyzes the conversion of glucosamine-6-phosphate to glucosamine-1-phosphate. This Paracoccus denitrificans (strain Pd 1222) protein is Phosphoglucosamine mutase.